Consider the following 453-residue polypeptide: Homogentisate 1,2-dioxygenase (453 aa).

The active-site Proton acceptor is His306. Fe cation-binding residues include His349 and Glu355. Positions 364 and 385 each coordinate homogentisate. His385 serves as a coordination point for Fe cation.

Belongs to the homogentisate dioxygenase family. As to quaternary structure, hexamer; dimer of trimers. Fe cation is required as a cofactor.

It carries out the reaction homogentisate + O2 = 4-maleylacetoacetate + H(+). Its pathway is amino-acid degradation; L-phenylalanine degradation; acetoacetate and fumarate from L-phenylalanine: step 4/6. Its function is as follows. Involved in the catabolism of homogentisate (2,5-dihydroxyphenylacetate or 2,5-OH-PhAc), a central intermediate in the degradation of phenylalanine and tyrosine. Catalyzes the oxidative ring cleavage of the aromatic ring of homogentisate to yield maleylacetoacetate. The protein is Homogentisate 1,2-dioxygenase of Rhizobium etli (strain ATCC 51251 / DSM 11541 / JCM 21823 / NBRC 15573 / CFN 42).